The chain runs to 256 residues: Thiazole synthase (256 aa).

The active-site Schiff-base intermediate with DXP is Lys-96. 1-deoxy-D-xylulose 5-phosphate is bound by residues Gly-157, 183 to 184 (AG), and 205 to 206 (NT).

The protein belongs to the ThiG family. In terms of assembly, homotetramer. Forms heterodimers with either ThiH or ThiS.

The protein resides in the cytoplasm. The enzyme catalyses [ThiS sulfur-carrier protein]-C-terminal-Gly-aminoethanethioate + 2-iminoacetate + 1-deoxy-D-xylulose 5-phosphate = [ThiS sulfur-carrier protein]-C-terminal Gly-Gly + 2-[(2R,5Z)-2-carboxy-4-methylthiazol-5(2H)-ylidene]ethyl phosphate + 2 H2O + H(+). The protein operates within cofactor biosynthesis; thiamine diphosphate biosynthesis. Catalyzes the rearrangement of 1-deoxy-D-xylulose 5-phosphate (DXP) to produce the thiazole phosphate moiety of thiamine. Sulfur is provided by the thiocarboxylate moiety of the carrier protein ThiS. In vitro, sulfur can be provided by H(2)S. The polypeptide is Thiazole synthase (Bacillus mycoides (strain KBAB4) (Bacillus weihenstephanensis)).